Consider the following 294-residue polypeptide: Mitochondrial HMG-box protein CIM1 (294 aa).

The N-terminal 90 residues, M1–S90, are a transit peptide targeting the mitochondrion. The HMG-box A stretch occupies residues N27–E102. Residues P110–I258 form an HMG-box B region.

It is found in the mitochondrion matrix. Its function is as follows. Mitochondrial HMG-box protein that limits the copy number of mitochondrial DNA (mtDNA), antagonizing HMG-box containing protein ABF2, a mtDNA packaging factor. This is Mitochondrial HMG-box protein CIM1 from Saccharomyces cerevisiae (strain ATCC 204508 / S288c) (Baker's yeast).